A 130-amino-acid polypeptide reads, in one-letter code: UPF0146 protein AF_0739.1 (130 aa).

The protein belongs to the UPF0146 family.

The chain is UPF0146 protein AF_0739.1 from Archaeoglobus fulgidus (strain ATCC 49558 / DSM 4304 / JCM 9628 / NBRC 100126 / VC-16).